The primary structure comprises 294 residues: Factor associated with metabolism and energy (294 aa).

The span at 1–12 shows a compositional bias: basic residues; that stretch reads MGLGHSKAHPRV. Disordered regions lie at residues 1-28 and 255-279; these read MGLGHSKAHPRVIKVTPLQSQETETPST and FWDSSSSDSDELEKDERRPQALVRT. The N-myristoyl glycine moiety is linked to residue glycine 2. The segment covering 17–28 has biased composition (polar residues); sequence PLQSQETETPST. A compositionally biased stretch (basic and acidic residues) spans 268–279; that stretch reads KDERRPQALVRT.

As to expression, expressed in proximal tubules of the kidney.

It is found in the cell membrane. It localises to the cytoplasmic vesicle. May be involved in tuning the metabolism, energy expenditure, and excretion processes. The chain is Factor associated with metabolism and energy from Mus musculus (Mouse).